A 316-amino-acid chain; its full sequence is Ribosomal protein L11 methyltransferase (316 aa).

S-adenosyl-L-methionine contacts are provided by Thr157, Gly178, Asp200, and Asn243.

It belongs to the methyltransferase superfamily. PrmA family.

It localises to the cytoplasm. The enzyme catalyses L-lysyl-[protein] + 3 S-adenosyl-L-methionine = N(6),N(6),N(6)-trimethyl-L-lysyl-[protein] + 3 S-adenosyl-L-homocysteine + 3 H(+). Methylates ribosomal protein L11. In Streptococcus pneumoniae (strain ATCC 700669 / Spain 23F-1), this protein is Ribosomal protein L11 methyltransferase.